Reading from the N-terminus, the 112-residue chain is Ribonuclease VapC8 (112 aa).

The region spanning 10–109 (LLDTSVFIAR…TDALIAATAE (100 aa)) is the PINc domain. Positions 12 and 101 each coordinate Mg(2+).

Belongs to the PINc/VapC protein family. Requires Mg(2+) as cofactor.

Its function is as follows. Toxic component of a type II toxin-antitoxin (TA) system. An RNase. The cognate antitoxin is VapB8. The sequence is that of Ribonuclease VapC8 (vapC8) from Mycobacterium tuberculosis (strain CDC 1551 / Oshkosh).